An 89-amino-acid polypeptide reads, in one-letter code: uncharacterized protein (89 aa).

It to Rhizobium NGR234A y4oN.

This is an uncharacterized protein from Sinorhizobium fredii (strain NBRC 101917 / NGR234).